The primary structure comprises 490 residues: Probable cytosol aminopeptidase (490 aa).

Mn(2+) is bound by residues Lys-258 and Asp-263. Residue Lys-270 is part of the active site. Positions 282, 341, and 343 each coordinate Mn(2+). Arg-345 is a catalytic residue.

Belongs to the peptidase M17 family. It depends on Mn(2+) as a cofactor.

It localises to the cytoplasm. The enzyme catalyses Release of an N-terminal amino acid, Xaa-|-Yaa-, in which Xaa is preferably Leu, but may be other amino acids including Pro although not Arg or Lys, and Yaa may be Pro. Amino acid amides and methyl esters are also readily hydrolyzed, but rates on arylamides are exceedingly low.. The catalysed reaction is Release of an N-terminal amino acid, preferentially leucine, but not glutamic or aspartic acids.. Presumably involved in the processing and regular turnover of intracellular proteins. Catalyzes the removal of unsubstituted N-terminal amino acids from various peptides. The sequence is that of Probable cytosol aminopeptidase from Microcystis aeruginosa (strain NIES-843 / IAM M-2473).